Consider the following 411-residue polypeptide: Acetate kinase (411 aa).

Asparagine 7 serves as a coordination point for Mg(2+). ATP is bound at residue lysine 14. Substrate is bound at residue arginine 94. Aspartate 151 serves as the catalytic Proton donor/acceptor. Residues 211 to 215 (HLGNG), 285 to 287 (DMR), and 333 to 337 (GIGEN) contribute to the ATP site. Mg(2+) is bound at residue glutamate 387.

Belongs to the acetokinase family. Homodimer. Mg(2+) is required as a cofactor. Mn(2+) serves as cofactor.

It is found in the cytoplasm. The enzyme catalyses acetate + ATP = acetyl phosphate + ADP. Its pathway is metabolic intermediate biosynthesis; acetyl-CoA biosynthesis; acetyl-CoA from acetate: step 1/2. Catalyzes the formation of acetyl phosphate from acetate and ATP. Can also catalyze the reverse reaction. This Syntrophobacter fumaroxidans (strain DSM 10017 / MPOB) protein is Acetate kinase.